A 237-amino-acid polypeptide reads, in one-letter code: KH homology domain-containing protein 1 (237 aa).

2 helical membrane passes run 7-29 and 33-50; these read RLFRVLFVIETVSEYGVLIFIYG and LQTLAMLLIGTVSFHLWI. Residues 96–155 form the KH; atypical domain; it reads PMVFHMEEDQEELIFGHGDTYLRCIEVHSHTLIQLESWFTATGQTRVTVVGPHRARQWLL.

The protein belongs to the KHDC1 family.

The protein localises to the membrane. The protein is KH homology domain-containing protein 1 of Homo sapiens (Human).